A 308-amino-acid chain; its full sequence is HGNGYNSNNGNGYNSNNGNGYNSNNNGNTNCNFGNCNNANSFNNNGNTNSLNGNNNGNSNNNGNGNNNGNSNNNGNGNNNGNTNNGNSYDSNTNDDSNSIPNAVSVGGSNKLVIKTKSDDSSQTISLLDVFKNYDSNNNGNSNNNGSSYNRNDNGNSYNSNNNGNSYNRNDNGNSYNSNNNGNSYNRNDNGNSYNRNDNGNSYNSNNNGNTNSFNNNGNTNSFNNNGDTNRIDSNSYNSNNNGDNSNTNSVLVPEPTVIVIPAPVQQSVGCVCKPDYDPLLYTDNETYNNKCEAECEGKTVWYDKACY.

Disordered regions lie at residues 1–21, 47–104, and 134–250; these read HGNGYNSNNGNGYNSNNGNGY, NTNS…PNAV, and YDSN…NTNS. Residues 47-99 show a composition bias toward low complexity; the sequence is NTNSLNGNNNGNSNNNGNGNNNGNSNNNGNGNNNGNTNNGNSYDSNTNDDSNS.

Component of the acid-insoluble organic matrix of the calcified shell.

It is found in the secreted. In Ruditapes philippinarum (Japanese carpet shell), this protein is Insoluble matrix shell protein 4.